A 342-amino-acid chain; its full sequence is Polygalacturonase inhibitor 2 (342 aa).

An N-terminal signal peptide occupies residues 1-29 (MTQFNIPVTMSSSLSIILVILVSLSTAHS). 2 disulfides stabilise this stretch: Cys32–Cys62 and Cys63–Cys72. A glycan (N-linked (GlcNAc...) (complex) asparagine) is linked at Asn64. LRR repeat units follow at residues 82–107 (NNLD…LPYL), 108–132 (NFLY…LTQL), 133–156 (HYLY…IKTL), 157–180 (VTLD…LPNL), 181–205 (VGIT…SKLF), 206–228 (TSMT…NLNL), 229–252 (AFVD…DKNT), 253–275 (QKIH…SKNL), 276–299 (NGLD…LKFL), and 300–319 (HSLN…GGNL). Asn141 is a glycosylation site (N-linked (GlcNAc...) (complex) asparagine). Asn303 carries an N-linked (GlcNAc...) asparagine glycan. Cystine bridges form between Cys310–Cys332 and Cys334–Cys341.

The protein belongs to the polygalacturonase-inhibiting protein family. Asn-303 is not glycosylated.

It is found in the secreted. It localises to the cell wall. Its subcellular location is the membrane. Inhibitor of fungal polygalacturonase. It is an important factor for plant resistance to phytopathogenic fungi. Inhibits all polygalacturonases (PG) tested, with the exception of PG from F.oxysporum which was only inhibited at 60%. The polypeptide is Polygalacturonase inhibitor 2 (PGIP2) (Phaseolus vulgaris (Kidney bean)).